The sequence spans 898 residues: MASRVQKKDDDESDFLFENLDKGQVIQEKRAFNESPIHPRKCSLVISQFLYLLSRGDSFTKTEATDIFFAATKLFQSKDIPLRRLMYLLLKELSTISQDAIIVISSLTKDMSHKIELYRANAIRILCKITDSSILPQIERYFKQSIVEKDPHVSSAALVSSIHLLKVCPEIVKRWANEVQEAISNKSNMVQYHALALLHRIKQHDRLAVSKLVSNLIKNSLRSPYAQSYLIRCCVEVIEETNTEDRIFREYIESCLRSKNEMVAYEAARSICTFKNVSNKEINSAVGVLQNFLNSTKPTLRFAAVRTLNKLAQTNPTAVIPCNLDMENLITDTNRSIATLAITTLLKVGNESNVERLIKQIANFLGDINDEFKIVVVDAITSLSQKFPKKYKHLIIFLNKILRDEGTLQLKQATLDAILTVVNNIPESKEIALTELCDYIEDCDFPDLSVQILHLIGQEGPLTSSPAQYMRYIYNRVLLDGGIIRAAAVTSIAKFGLLYEPMKEKVVILLQRCLLDEDDEVRDRATLYLKLFKENDVRYLNKVLMDDVPVPLNNLQKSLELYLHQGDFSEPFDIASVSTVVETYQSPLLGDGKSPFSTGASKKGDSVTGTPKSNNASNNNNNNEESSGPESFATKLSQIPQFSTFGKLLKSSEYIELTETETEYVVNCVKHIYREHIVFQFNCTNTLNEQQLSNVSVKMVPSDPKLLKYECSIPIDVLPYGEPQQCYVAIRYIPANGYPLCSFSNALKFKVKEVDPSTGELDEPGYDDQYSLERLEIVPKDFLNRAFVGNFSEEWKKMSEDTQLVQTFSLVGVKSIDEAVKQIIKTLGMAPAEKSEVVTPKSAKHILYLTGKSLNNQLIYVRARMKLDQSQTNTDVELTIKSDDESLNDFVISAFIEK.

HEAT repeat units lie at residues 62–99, 170–207, 280–317, 319–352, 353–389, and 392–427; these read TEATDIFFAATKLFQSKDIPLRRLMYLLLKELSTISQD, EIVKRWANEVQEAISNKSNMVQYHALALLHRIKQHDRL, KEINSAVGVLQNFLNSTKPTLRFAAVRTLNKLAQTNPT, VIPCNLDMENLITDTNRSIATLAITTLLKVGNES, NVERLIKQIANFLGDINDEFKIVVVDAITSLSQKFPK, and KHLIIFLNKILRDEGTLQLKQATLDAILTVVNNIPE. The segment at 592 to 631 is disordered; the sequence is GKSPFSTGASKKGDSVTGTPKSNNASNNNNNNEESSGPES. Low complexity predominate over residues 613 to 626; that stretch reads SNNASNNNNNNEES.

The protein belongs to the COPG family. Oligomeric complex that consists of at least the alpha, beta, beta', gamma, delta, epsilon and zeta subunits.

The protein localises to the cytoplasm. Its subcellular location is the golgi apparatus membrane. It is found in the cytoplasmic vesicle. The protein resides in the COPI-coated vesicle membrane. The coatomer is a cytosolic protein complex that binds to dilysine motifs and reversibly associates with Golgi non-clathrin-coated vesicles, which further mediate biosynthetic protein transport from the ER, via the Golgi up to the trans Golgi network. Coatomer complex is required for budding from Golgi membranes, and is essential for the retrograde Golgi-to-ER transport of dilysine-tagged proteins. In Dictyostelium discoideum (Social amoeba), this protein is Coatomer subunit gamma (copG).